The chain runs to 99 residues: Aspartyl/glutamyl-tRNA(Asn/Gln) amidotransferase subunit C (99 aa).

Belongs to the GatC family. As to quaternary structure, heterotrimer of A, B and C subunits.

The catalysed reaction is L-glutamyl-tRNA(Gln) + L-glutamine + ATP + H2O = L-glutaminyl-tRNA(Gln) + L-glutamate + ADP + phosphate + H(+). It catalyses the reaction L-aspartyl-tRNA(Asn) + L-glutamine + ATP + H2O = L-asparaginyl-tRNA(Asn) + L-glutamate + ADP + phosphate + 2 H(+). Its function is as follows. Allows the formation of correctly charged Asn-tRNA(Asn) or Gln-tRNA(Gln) through the transamidation of misacylated Asp-tRNA(Asn) or Glu-tRNA(Gln) in organisms which lack either or both of asparaginyl-tRNA or glutaminyl-tRNA synthetases. The reaction takes place in the presence of glutamine and ATP through an activated phospho-Asp-tRNA(Asn) or phospho-Glu-tRNA(Gln). The polypeptide is Aspartyl/glutamyl-tRNA(Asn/Gln) amidotransferase subunit C (Burkholderia vietnamiensis (strain G4 / LMG 22486) (Burkholderia cepacia (strain R1808))).